Reading from the N-terminus, the 130-residue chain is Early 3 receptor internalization and degradation beta protein (130 aa).

A signal peptide spans 1–19; it reads MKRSVIFVLLIFCALPVLC. A helical membrane pass occupies residues 53 to 77; sequence AWLYAIISVMVFCSTIFALAIYPYL. The segment at 122–125 is tyrosine-based sorting motif; that stretch reads YFNL.

Belongs to the adenoviridae E3_RID-beta family. In terms of assembly, interacts with E3 RID-alpha and E3 CR1-alpha. Post-translationally, phosphorylated on serine. In terms of processing, O-glycosylated, but not N-glycosylated.

It localises to the host membrane. In terms of biological role, prevents infected cell apoptosis induced by the host immune system. Acts by down-regulating a number of cell surface receptors in the tumor necrosis factor (TNF) receptor superfamily, namely FAS, TNFRSF10A/TRAIL receptor 1, and TNFRSF10B/TRAIL receptor 2. Down-regulation of these death receptors protects adenovirus-infected cells from apoptosis induced by the death receptor ligands Fas ligand and TRAIL. RID complex also down-regulates certain tyrosine kinase cell surface receptors, especially the epidermal growth factor receptor (EGFR). RID-mediated Fas and EGFR down-regulation occurs via endocytosis of the receptors into endosomes followed by transport to and degradation within lysosomes. In Human adenovirus C serotype 2 (HAdV-2), this protein is Early 3 receptor internalization and degradation beta protein.